A 203-amino-acid chain; its full sequence is Orotate phosphoribosyltransferase (203 aa).

Residues arginine 94, lysine 98, histidine 100, and 120-128 contribute to the 5-phospho-alpha-D-ribose 1-diphosphate site; that span reads EDLISTGGS. Residue serine 124 coordinates orotate.

This sequence belongs to the purine/pyrimidine phosphoribosyltransferase family. PyrE subfamily. Homodimer. Mg(2+) serves as cofactor.

It catalyses the reaction orotidine 5'-phosphate + diphosphate = orotate + 5-phospho-alpha-D-ribose 1-diphosphate. It functions in the pathway pyrimidine metabolism; UMP biosynthesis via de novo pathway; UMP from orotate: step 1/2. In terms of biological role, catalyzes the transfer of a ribosyl phosphate group from 5-phosphoribose 1-diphosphate to orotate, leading to the formation of orotidine monophosphate (OMP). This chain is Orotate phosphoribosyltransferase, found in Staphylococcus aureus (strain COL).